Here is a 287-residue protein sequence, read N- to C-terminus: Zinc transporter ZIP9 (287 aa).

The chain crosses the membrane as a helical span at residues 4 to 24 (FLSISLLSLAMLVGCYVAGII). Residue Asn-29 is glycosylated (N-linked (GlcNAc...) asparagine). 5 helical membrane passes run 35-55 (LKLV…AVIV), 107-127 (AYIG…DQIG), 147-167 (ITTT…LGAA), 177-197 (LIVF…LVSF), and 211-231 (HLLV…LGLS). Asn-242 is a glycosylation site (N-linked (GlcNAc...) asparagine). Residues 245–265 (GVAMLFSAGTFLYVATVHVLP) form a helical membrane-spanning segment. A disordered region spans residues 268–287 (TSTNQSGSSLSPRPLPSGKN). Asn-271 carries an N-linked (GlcNAc...) asparagine glycan. The segment covering 273-287 (SGSSLSPRPLPSGKN) has biased composition (low complexity).

It belongs to the ZIP transporter (TC 2.A.5) family.

It localises to the golgi apparatus. The protein localises to the trans-Golgi network membrane. The protein resides in the cell membrane. Its subcellular location is the cytoplasm. It is found in the perinuclear region. It localises to the mitochondrion. The protein localises to the nucleus. The catalysed reaction is Zn(2+)(in) = Zn(2+)(out). In terms of biological role, transports zinc ions across cell and organelle membranes into the cytoplasm and regulates intracellular zinc homeostasis. Participates in the zinc ions efflux out of the secretory compartments. Regulates intracellular zinc level, resulting in the enhancement of AKT1 and MAPK3/MAPK1 (Erk1/2) phosphorylation in response to the BCR activation. Also functions as a membrane androgen receptor that mediates, through a G protein, the non-classical androgen signaling pathway, characterized by the activation of MAPK3/MAPK1 (Erk1/2) and transcription factors CREB1 or ATF1. This pathway contributes to CLDN1 and CLDN5 expression and tight junction formation between adjacent Sertoli cells. Mediates androgen-induced vascular endothelial cell proliferation through activation of an inhibitory G protein leading to the AKT1 and MAPK3/MAPK1 (Erk1/2) activation which in turn modulate inhibition (phosphorylation) of GSK3B and CCND1 transcription. Moreover, has dual functions as a membrane-bound androgen receptor and as an androgen-dependent zinc transporter both of which are mediated through an inhibitory G protein (Gi) that mediates both MAP kinase and zinc signaling leading to the androgen-dependent apoptotic process. The chain is Zinc transporter ZIP9 from Rattus norvegicus (Rat).